Here is an 849-residue protein sequence, read N- to C-terminus: Leucine--tRNA ligase (849 aa).

The short motif at 44–54 (PYPSGRIHMGH) is the 'HIGH' region element. The 'KMSKS' region motif lies at 620-624 (KMSKS). Lys-623 is an ATP binding site.

The protein belongs to the class-I aminoacyl-tRNA synthetase family.

It is found in the cytoplasm. It carries out the reaction tRNA(Leu) + L-leucine + ATP = L-leucyl-tRNA(Leu) + AMP + diphosphate. This chain is Leucine--tRNA ligase, found in Sphingopyxis alaskensis (strain DSM 13593 / LMG 18877 / RB2256) (Sphingomonas alaskensis).